Consider the following 173-residue polypeptide: Inorganic pyrophosphatase (173 aa).

Residues Lys-28, Arg-42, and Tyr-54 each coordinate substrate. Positions 64, 69, and 101 each coordinate Mg(2+). Residue Tyr-140 coordinates substrate.

Belongs to the PPase family. Homohexamer. Mg(2+) serves as cofactor.

It localises to the cytoplasm. It carries out the reaction diphosphate + H2O = 2 phosphate + H(+). Catalyzes the hydrolysis of inorganic pyrophosphate (PPi) forming two phosphate ions. The polypeptide is Inorganic pyrophosphatase (Helicobacter pylori (strain ATCC 700392 / 26695) (Campylobacter pylori)).